A 516-amino-acid polypeptide reads, in one-letter code: Probable rhamnogalacturonase B (516 aa).

An N-terminal signal peptide occupies residues M1–A21. Cysteines 42 and 68 form a disulfide. N145 is a glycosylation site (N-linked (GlcNAc...) asparagine). D219 serves as the catalytic Proton donor. Residues C221 and C238 are joined by a disulfide bond. A glycan (N-linked (GlcNAc...) asparagine) is linked at N239. Residue H294 is part of the active site. A glycan (N-linked (GlcNAc...) asparagine) is linked at N321. Cystine bridges form between C344-C350 and C372-C381. The tract at residues E462–A516 is disordered. Residues R469–A485 are compositionally biased toward polar residues. The segment covering P502 to A516 has biased composition (basic residues).

The protein belongs to the glycosyl hydrolase 28 family.

The protein localises to the secreted. It catalyses the reaction Endohydrolysis of alpha-D-GalA-(1-&gt;2)-alpha-L-Rha glycosidic bond in the rhamnogalacturonan I backbone with initial inversion of anomeric configuration releasing oligosaccharides with beta-D-GalA at the reducing end.. In terms of biological role, pectinolytic enzymes consist of four classes of enzymes: pectine lyase, polygalacturonase, pectin methylesterase and rhamnogalacturonase. Hydrolyzes alpha-D-galacturonopyranosyl-(1,2)-alpha-L-rhamnopyranosyl linkages in the backbone of the hairy regions of pectins. The sequence is that of Probable rhamnogalacturonase B (rhgB) from Neosartorya fischeri (strain ATCC 1020 / DSM 3700 / CBS 544.65 / FGSC A1164 / JCM 1740 / NRRL 181 / WB 181) (Aspergillus fischerianus).